We begin with the raw amino-acid sequence, 344 residues long: GTPase Obg (344 aa).

Residues 1 to 159 (MKFLDEAKVY…MWLILRLKLI (159 aa)) form the Obg domain. The region spanning 160 to 327 (ADAGLVGLPN…ALRAIQAQLD (168 aa)) is the OBG-type G domain. GTP contacts are provided by residues 166–173 (GLPNAGKS), 191–195 (FTTLH), 212–215 (DIPG), 279–282 (SKAD), and 308–310 (SAA). Mg(2+) is bound by residues serine 173 and threonine 193.

It belongs to the TRAFAC class OBG-HflX-like GTPase superfamily. OBG GTPase family. In terms of assembly, monomer. Mg(2+) is required as a cofactor.

It localises to the cytoplasm. In terms of biological role, an essential GTPase which binds GTP, GDP and possibly (p)ppGpp with moderate affinity, with high nucleotide exchange rates and a fairly low GTP hydrolysis rate. Plays a role in control of the cell cycle, stress response, ribosome biogenesis and in those bacteria that undergo differentiation, in morphogenesis control. In Methylorubrum populi (strain ATCC BAA-705 / NCIMB 13946 / BJ001) (Methylobacterium populi), this protein is GTPase Obg.